The chain runs to 345 residues: Phosphoribosylformylglycinamidine cyclo-ligase (345 aa).

This sequence belongs to the AIR synthase family.

Its subcellular location is the cytoplasm. The enzyme catalyses 2-formamido-N(1)-(5-O-phospho-beta-D-ribosyl)acetamidine + ATP = 5-amino-1-(5-phospho-beta-D-ribosyl)imidazole + ADP + phosphate + H(+). The protein operates within purine metabolism; IMP biosynthesis via de novo pathway; 5-amino-1-(5-phospho-D-ribosyl)imidazole from N(2)-formyl-N(1)-(5-phospho-D-ribosyl)glycinamide: step 2/2. The protein is Phosphoribosylformylglycinamidine cyclo-ligase of Shigella dysenteriae serotype 1 (strain Sd197).